Here is a 41-residue protein sequence, read N- to C-terminus: Chymotrypsin inhibitor (41 aa).

Inhibits chymotrypsin. The chain is Chymotrypsin inhibitor from Eisenia hortensis (European nightcrawler).